The following is a 431-amino-acid chain: Probable glucarate dehydratase (431 aa).

Residues His-29, Thr-108, Tyr-153, and Lys-198 each coordinate substrate. The active-site Proton acceptor is the Lys-200. Residues Asp-228 and Asn-276 each coordinate Mg(2+). Residues Asp-228 to Asn-230, Asn-276, His-327 to Asn-329, His-356, and Arg-410 each bind substrate. His-327 serves as the catalytic Proton acceptor.

It belongs to the mandelate racemase/muconate lactonizing enzyme family. GlucD subfamily. Requires Mg(2+) as cofactor.

The enzyme catalyses D-glucarate = 5-dehydro-4-deoxy-D-glucarate + H2O. It participates in carbohydrate acid metabolism; D-glucarate degradation; 2,5-dioxopentanoate from D-glucarate: step 1/2. Functionally, catalyzes the dehydration of glucarate to 5-keto-4-deoxy-D-glucarate (5-kdGluc). The protein is Probable glucarate dehydratase (gudD) of Streptomyces coelicolor (strain ATCC BAA-471 / A3(2) / M145).